The chain runs to 132 residues: Small ribosomal subunit protein uS8 (132 aa).

It belongs to the universal ribosomal protein uS8 family. Part of the 30S ribosomal subunit. Contacts proteins S5 and S12.

In terms of biological role, one of the primary rRNA binding proteins, it binds directly to 16S rRNA central domain where it helps coordinate assembly of the platform of the 30S subunit. This Rickettsia canadensis (strain McKiel) protein is Small ribosomal subunit protein uS8.